Reading from the N-terminus, the 1004-residue chain is Copper-transporting ATPase (1004 aa).

Residues 1–262 are Cytoplasmic-facing; that stretch reads MREVILAVHG…FWKKNSIKST (262 aa). HMA domains follow at residues 2–67 and 80–146; these read REVI…FDCE and KEGL…FDSN. Cu(+) is bound by residues C13, C16, C91, and C94. Residues 263 to 283 form a helical membrane-spanning segment; that stretch reads LLAIICMLLYMIVPMMWPTIV. At 284-303 the chain is on the lumenal, vesicle side; it reads QDRIFPYKETSFVRGLFYRD. The chain crosses the membrane as a helical span at residues 304–324; sequence ILGVILASYIQFSVGFYFYKA. The Cytoplasmic portion of the chain corresponds to 325–335; it reads AWASLKHGSGT. A helical transmembrane segment spans residues 336–356; the sequence is MDTLVCVSTTCAYTFSVFSLV. Residues 357–370 are Lumenal, vesicle-facing; that stretch reads HNMFHPSSTGKLPR. Residues 371-391 form a helical membrane-spanning segment; it reads IVFDTSIMIISYISIGKYLET. At 392 to 528 the chain is on the cytoplasmic side; that stretch reads LAKSQTSTAL…IQGYADYLAS (137 aa). A helical membrane pass occupies residues 529–549; sequence IFVPGILILAVLTFFIWCFIL. Residues 550 to 577 lie on the Lumenal, vesicle side of the membrane; that stretch reads NISANPPVAFTANTKADNFFICLQTATS. A helical membrane pass occupies residues 578–598; that stretch reads VVIVACPCALGLATPTAIMVG. The Cytoplasmic segment spans residues 599–901; that stretch reads TGVGAQNGVL…LKTFKRIKLN (303 aa). The active-site 4-aspartylphosphate intermediate is the D627. D838 and D842 together coordinate Mg(2+). A helical transmembrane segment spans residues 902–924; it reads LFWALCYNIFMIPIAMGVLIPWG. Over 925-927 the chain is Lumenal, vesicle; the sequence is ITL. A helical transmembrane segment spans residues 928–950; sequence PPMLAGLAMAFSSVSVVLSSLML. Over 951-1004 the chain is Cytoplasmic; the sequence is KKWTPPDIESHGISDFKSKFSIGNFWSRLFSTRAIAGEQDIESQAGLMSNEEVL.

Belongs to the cation transport ATPase (P-type) (TC 3.A.3) family. Type IB subfamily. Interacts with the copper chaperone ATX1 via the copper anion.

It localises to the golgi apparatus. The protein resides in the trans-Golgi network membrane. It carries out the reaction Cu(+)(in) + ATP + H2O = Cu(+)(out) + ADP + phosphate + H(+). Its function is as follows. Copper-transporting P-type ATPase necessary for the proper uptake of iron. Required for export of copper from cytosol into extracytosolic compartment. Retrieves copper from the metallochaperone ATX1 and incorporates it into trans-Golgi vesicles where they are acquired by the cell-surface iron transporter FET3. Required the production of inositolphosphorylceramide D, probably by delivering copper to a yet to be identified enzyme. This is Copper-transporting ATPase from Saccharomyces cerevisiae (strain ATCC 204508 / S288c) (Baker's yeast).